Reading from the N-terminus, the 527-residue chain is Thymidine kinase (527 aa).

Residues 1-57 (MTGRGQPPKKNDTYDYPRKQPPKNGSYDNYDYPTSTKTRSTNKQRKDSNYPPRETIF) form a disordered region. The segment covering 9-18 (KKNDTYDYPR) has biased composition (basic and acidic residues). Positions 32–41 (YPTSTKTRST) are enriched in polar residues. Position 216-223 (216-223 (GSIGVGKT)) interacts with ATP. The Proton acceptor role is filled by E243. Residues Y260 and Q281 each coordinate substrate. R368 is a binding site for ATP. A substrate-binding site is contributed by R374.

It belongs to the herpesviridae thymidine kinase family. As to quaternary structure, homodimer.

The catalysed reaction is thymidine + ATP = dTMP + ADP + H(+). In terms of biological role, catalyzes the transfer of the gamma-phospho group of ATP to thymidine to generate dTMP in the salvage pathway of pyrimidine synthesis. The dTMP serves as a substrate for DNA polymerase during viral DNA replication. Allows the virus to be reactivated and to grow in non-proliferative cells lacking a high concentration of phosphorylated nucleic acid precursors. In Saimiriine herpesvirus 2 (strain 11) (SaHV-2), this protein is Thymidine kinase.